Here is a 212-residue protein sequence, read N- to C-terminus: 3-isopropylmalate dehydratase small subunit (212 aa).

This sequence belongs to the LeuD family. LeuD type 1 subfamily. In terms of assembly, heterodimer of LeuC and LeuD.

The enzyme catalyses (2R,3S)-3-isopropylmalate = (2S)-2-isopropylmalate. It functions in the pathway amino-acid biosynthesis; L-leucine biosynthesis; L-leucine from 3-methyl-2-oxobutanoate: step 2/4. Its function is as follows. Catalyzes the isomerization between 2-isopropylmalate and 3-isopropylmalate, via the formation of 2-isopropylmaleate. This chain is 3-isopropylmalate dehydratase small subunit, found in Dechloromonas aromatica (strain RCB).